The primary structure comprises 303 residues: MKVIFMGTPEFAVPTLKKLIIHHEVKAVFTQQPKAKGRGLYLAKSPIHQLAFEHQIPVYSPSTLRNDETINLINKVDADIIVVIAYGFIVPKAILEAKKYGCLNIHPSDLPRHRGAAPLQRTIIEGDLKSSVCIMRMDSGLDTGDILLKEDLNLEKRITLDELSNRCAHLGAELLIQTLANIDNIVPVKQSSNGVTYAHKLTKAEGKINWYESAYSIDCKIRGMNPWPGAYFSYNDKIIKILEAEYLNYNHHFIPGTVISNKLEIACGSGILRVTKLQQESKKALNIEAFLRGTNILKDTILK.

A (6S)-5,6,7,8-tetrahydrofolate-binding site is contributed by 108–111 (SDLP).

It belongs to the Fmt family.

It carries out the reaction L-methionyl-tRNA(fMet) + (6R)-10-formyltetrahydrofolate = N-formyl-L-methionyl-tRNA(fMet) + (6S)-5,6,7,8-tetrahydrofolate + H(+). Its function is as follows. Attaches a formyl group to the free amino group of methionyl-tRNA(fMet). The formyl group appears to play a dual role in the initiator identity of N-formylmethionyl-tRNA by promoting its recognition by IF2 and preventing the misappropriation of this tRNA by the elongation apparatus. The protein is Methionyl-tRNA formyltransferase of Rickettsia typhi (strain ATCC VR-144 / Wilmington).